Consider the following 488-residue polypeptide: MLIFDRSREGRACASLFPQTPADIRGLPGHLLRQTPPPLPEVTELDVVRHYTRLSQKNFSIDTHFYPLGSCTMKYNPKAANVLARQPGFAALHPLGTERFGQGTLSCLYELQEYLKTLTGMTAVSLSPAAGAQGEFCGVAMIRAYHDARNDHERNEILVPDAAHGTNPASAAMCGYQVREIPTNADGDVDLEALKQAVGPKTAGIMLTNPSTLGVFEHRIPEIAALVHEAGGLLYYDGANLNAILGKVRPGDMGFDVIHLNLHKTFSTPHGGGGPGAGPVGVNARLQPFLPLPMVARSGNGYRWLAESDRPQSIGRLSAFAGNVGVLLRAYVYIRLLGYPGLRRVAEYATLNANYLQKRLVEAGFDTAFPARRAAHEFILSVQRQKKEHHVTALDFAKRLLDYGFHAPTVYFPLLIPECLMIEPTETENKETLDAFVDAMAAILKEAAEEPERLGQAPHCTPVRRLDEARAARHPDLAWKPAAPVPPR.

K264 carries the post-translational modification N6-(pyridoxal phosphate)lysine.

This sequence belongs to the GcvP family. C-terminal subunit subfamily. In terms of assembly, the glycine cleavage system is composed of four proteins: P, T, L and H. In this organism, the P 'protein' is a heterodimer of two subunits. Requires pyridoxal 5'-phosphate as cofactor.

It catalyses the reaction N(6)-[(R)-lipoyl]-L-lysyl-[glycine-cleavage complex H protein] + glycine + H(+) = N(6)-[(R)-S(8)-aminomethyldihydrolipoyl]-L-lysyl-[glycine-cleavage complex H protein] + CO2. The glycine cleavage system catalyzes the degradation of glycine. The P protein binds the alpha-amino group of glycine through its pyridoxal phosphate cofactor; CO(2) is released and the remaining methylamine moiety is then transferred to the lipoamide cofactor of the H protein. In Methylococcus capsulatus (strain ATCC 33009 / NCIMB 11132 / Bath), this protein is Probable glycine dehydrogenase (decarboxylating) subunit 2.